Here is a 545-residue protein sequence, read N- to C-terminus: Glucose-6-phosphate isomerase (545 aa).

E351 acts as the Proton donor in catalysis. Residues H382 and K510 contribute to the active site.

It belongs to the GPI family.

It is found in the cytoplasm. The enzyme catalyses alpha-D-glucose 6-phosphate = beta-D-fructose 6-phosphate. The protein operates within carbohydrate biosynthesis; gluconeogenesis. Its pathway is carbohydrate degradation; glycolysis; D-glyceraldehyde 3-phosphate and glycerone phosphate from D-glucose: step 2/4. Functionally, catalyzes the reversible isomerization of glucose-6-phosphate to fructose-6-phosphate. The chain is Glucose-6-phosphate isomerase from Shewanella sediminis (strain HAW-EB3).